We begin with the raw amino-acid sequence, 95 residues long: Translation initiation factor 1A (95 aa).

One can recognise an S1-like domain in the interval 7-81 (GRKNLRMPED…DKADVTWRYE (75 aa)).

This sequence belongs to the eIF-1A family.

Seems to be required for maximal rate of protein biosynthesis. Enhances ribosome dissociation into subunits and stabilizes the binding of the initiator Met-tRNA(I) to 40 S ribosomal subunits. This chain is Translation initiation factor 1A (eIF1A), found in Halobacterium salinarum (strain ATCC 29341 / DSM 671 / R1).